Consider the following 392-residue polypeptide: Succinate--CoA ligase [ADP-forming] subunit beta (392 aa).

One can recognise an ATP-grasp domain in the interval Lys9 to Glu248. ATP is bound by residues Lys50, Gly57 to Gly59, Glu103, Met106, and Glu111. The Mg(2+) site is built by Asn203 and Asp217. Substrate contacts are provided by residues Asn268 and Gly325–Val327.

It belongs to the succinate/malate CoA ligase beta subunit family. As to quaternary structure, heterotetramer of two alpha and two beta subunits. Requires Mg(2+) as cofactor.

The enzyme catalyses succinate + ATP + CoA = succinyl-CoA + ADP + phosphate. The catalysed reaction is GTP + succinate + CoA = succinyl-CoA + GDP + phosphate. It functions in the pathway carbohydrate metabolism; tricarboxylic acid cycle; succinate from succinyl-CoA (ligase route): step 1/1. In terms of biological role, succinyl-CoA synthetase functions in the citric acid cycle (TCA), coupling the hydrolysis of succinyl-CoA to the synthesis of either ATP or GTP and thus represents the only step of substrate-level phosphorylation in the TCA. The beta subunit provides nucleotide specificity of the enzyme and binds the substrate succinate, while the binding sites for coenzyme A and phosphate are found in the alpha subunit. The protein is Succinate--CoA ligase [ADP-forming] subunit beta of Chlorobaculum tepidum (strain ATCC 49652 / DSM 12025 / NBRC 103806 / TLS) (Chlorobium tepidum).